A 37-amino-acid polypeptide reads, in one-letter code: Large ribosomal subunit protein bL36 (37 aa).

This sequence belongs to the bacterial ribosomal protein bL36 family.

This chain is Large ribosomal subunit protein bL36, found in Histophilus somni (strain 129Pt) (Haemophilus somnus).